Consider the following 148-residue polypeptide: MANIVYFSSVSENTHRFVQKLELPAIRIPLKDRIRVEEPYVLILPTYGGGHANGPDPDRGGYVPKQVIAFLNDEHNRSLIRGVIAAGNTNFGAEFGYAGVVVSRKCDVPFLYRFELMGTTDDVFAVRAGLQDFWKDQSCPQPSQLQNR.

This sequence belongs to the NrdI family.

Functionally, probably involved in ribonucleotide reductase function. This is Protein NrdI from Mycolicibacterium gilvum (strain PYR-GCK) (Mycobacterium gilvum (strain PYR-GCK)).